Reading from the N-terminus, the 465-residue chain is Iron-sulfur cluster assembly SufBD family protein SERP0500 (465 aa).

It belongs to the iron-sulfur cluster assembly SufBD family.

In Staphylococcus epidermidis (strain ATCC 35984 / DSM 28319 / BCRC 17069 / CCUG 31568 / BM 3577 / RP62A), this protein is Iron-sulfur cluster assembly SufBD family protein SERP0500.